The primary structure comprises 345 residues: Guanine nucleotide-binding protein G(i) subunit alpha-3 (345 aa).

The G-alpha domain maps to 23 to 345 (KEVKLLLLGA…KSNLMECGLY (323 aa)). Residues 26–39 (KLLLLGAGESGKST) form a G1 motif region. GTP contacts are provided by Gly33, Glu34, Ser35, Gly36, Lys37, Ser38, Thr39, Asp141, Ser142, Leu166, Arg167, Thr168, Arg169, Val170, Lys171, Thr172, Val192, Gly194, Asn260, Lys261, Asp263, Leu264, Cys316, Ala317, and Thr318. Ser38 provides a ligand contact to Mg(2+). The segment at 164 to 172 (DVLRTRVKT) is G2 motif. Position 172 (Thr172) interacts with Mg(2+). The G3 motif stretch occupies residues 187 to 196 (FKMFDVGGQR). The G4 motif stretch occupies residues 256 to 263 (ILFLNKKD). The tract at residues 315–320 (TCATDT) is G5 motif.

This sequence belongs to the G-alpha family. G(i/o/t/z) subfamily. In terms of assembly, heterotrimeric G proteins are composed of 3 units; alpha, beta and gamma. The alpha subunit contains the guanine nucleotide binding site. GTP binding causes dissociation of the heterotrimer, liberating the individual subunits so that they can interact with downstream effector proteins.

The protein resides in the cytoplasm. It is found in the cell membrane. Its subcellular location is the cytoskeleton. The protein localises to the microtubule organizing center. It localises to the centrosome. The protein resides in the membrane. Functionally, heterotrimeric guanine nucleotide-binding proteins (G proteins) function as transducers downstream of G protein-coupled receptors (GPCRs) in numerous signaling cascades. The alpha chain contains the guanine nucleotide binding site and alternates between an active, GTP-bound state and an inactive, GDP-bound state. Signaling by an activated GPCR promotes GDP release and GTP binding. The alpha subunit has a low GTPase activity that converts bound GTP to GDP, thereby terminating the signal. Both GDP release and GTP hydrolysis are modulated by numerous regulatory proteins. Signaling is mediated via effector proteins, such as adenylate cyclase. Inhibits adenylate cyclase activity, leading to decreased intracellular cAMP levels. Stimulates the activity of receptor-regulated K(+) channels. The active GTP-bound form prevents the association of RGS14 with centrosomes and is required for the translocation of RGS14 from the cytoplasm to the plasma membrane. May play a role in cell division. The active GTP-bound form activates the calcium permeant TRPC5 ion channels. The chain is Guanine nucleotide-binding protein G(i) subunit alpha-3 (gnai3) from Xenopus laevis (African clawed frog).